Here is a 390-residue protein sequence, read N- to C-terminus: S-adenosylmethionine:tRNA ribosyltransferase-isomerase (390 aa).

The disordered stretch occupies residues 1–22 (MTQPLSQDQHDSSSNMPTDNAE).

The protein belongs to the QueA family. As to quaternary structure, monomer.

The protein resides in the cytoplasm. It carries out the reaction 7-aminomethyl-7-carbaguanosine(34) in tRNA + S-adenosyl-L-methionine = epoxyqueuosine(34) in tRNA + adenine + L-methionine + 2 H(+). The protein operates within tRNA modification; tRNA-queuosine biosynthesis. In terms of biological role, transfers and isomerizes the ribose moiety from AdoMet to the 7-aminomethyl group of 7-deazaguanine (preQ1-tRNA) to give epoxyqueuosine (oQ-tRNA). In Psychrobacter sp. (strain PRwf-1), this protein is S-adenosylmethionine:tRNA ribosyltransferase-isomerase.